A 1669-amino-acid polypeptide reads, in one-letter code: Collagen alpha-3(IV) chain (1669 aa).

An N-terminal signal peptide occupies residues Met-1–Ser-28. Residues Lys-29–Ala-42 form a 7S domain region. The tract at residues Gly-43–Pro-1436 is triple-helical region. Disordered stretches follow at residues Thr-44–Ser-473 and Pro-500–Gly-1439. The span at Pro-54–Pro-68 shows a compositional bias: low complexity. Pro residues predominate over residues Pro-105–Pro-114. The N-linked (GlcNAc...) asparagine glycan is linked to Asn-126. A compositionally biased stretch (pro residues) spans Pro-188–Pro-200. Residues Phe-202–Pro-211 are compositionally biased toward low complexity. The N-linked (GlcNAc...) asparagine glycan is linked to Asn-253. Positions Ser-255 to Glu-269 are enriched in basic and acidic residues. Composition is skewed to low complexity over residues Pro-279 to Pro-290 and Ser-382 to Pro-393. Residues Pro-416 to Cys-437 are compositionally biased toward pro residues. Residues Asn-551 to Leu-560 are compositionally biased toward low complexity. Pro residues-rich tracts occupy residues Pro-596–Tyr-617 and Leu-654–Gln-665. Low complexity predominate over residues Ala-666–Gly-684. The segment covering Gly-778–Gly-787 has biased composition (gly residues). Positions Arg-830 to Asp-832 match the Cell attachment site motif. Residues Cys-861–Ala-876 are compositionally biased toward low complexity. Positions Lys-922–Lys-939 are enriched in basic and acidic residues. Residues Arg-970 to Pro-985 show a composition bias toward low complexity. The short motif at Arg-994–Asp-996 is the Cell attachment site element. Low complexity predominate over residues Ser-1092–Ser-1103. A compositionally biased stretch (pro residues) spans Pro-1128 to Pro-1146. Positions Arg-1152–Asp-1154 match the Cell attachment site motif. Low complexity predominate over residues Pro-1228 to Pro-1248. Pro residues predominate over residues Glu-1250–Pro-1259. Residues Arg-1304 to Asp-1306 carry the Cell attachment site motif. The segment covering Pro-1333 to Arg-1343 has biased composition (pro residues). Low complexity-rich tracts occupy residues Gln-1366–Pro-1379 and Pro-1402–Asn-1429. The epitope recognized by Goodpasture antibodies stretch occupies residues Gly-1425–Arg-1443. A Collagen IV NC1 domain is found at Gly-1444 to Arg-1668. Cystine bridges form between Cys-1459/Cys-1550, Cys-1492/Cys-1547, Cys-1504/Cys-1510, Cys-1569/Cys-1664, Cys-1603/Cys-1661, and Cys-1615/Cys-1621. Positions Asn-1478–Ala-1556 are required for the anti-angiogenic activity of tumstatin. An S-Lysyl-methionine sulfilimine (Met-Lys) (interchain with K-1650) cross-link involves residue Met-1532. The tract at residues Ala-1609 to Ser-1627 is required for the anti-tumor cell activity of tumstatin. An S-Lysyl-methionine sulfilimine (Lys-Met) (interchain with M-1532) cross-link involves residue Lys-1650.

Belongs to the type IV collagen family. There are six type IV collagen isoforms, alpha 1(IV)-alpha 6(IV), each of which can form a triple helix structure with 2 other chains to generate type IV collagen network. The alpha 3(IV) chain forms a triple helical protomer with alpha 4(IV) and alpha 5(IV); this triple helical structure dimerizes through NC1-NC1 domain interactions such that the alpha 3(IV), alpha 4(IV) and alpha 5(IV) chains of one protomer connect with the alpha 5(IV), alpha 4(IV) and alpha 3(IV) chains of the opposite promoter, respectively. Interacts with ITGB3. Associates with LAMB2 at the neuromuscular junction and in GBM. In terms of processing, prolines at the third position of the tripeptide repeating unit (G-X-Y) are hydroxylated in some or all of the chains. Post-translationally, type IV collagens contain numerous cysteine residues which are involved in inter- and intramolecular disulfide bonding. 12 of these, located in the NC1 domain, are conserved in all known type IV collagens. The trimeric structure of the NC1 domains is stabilized by covalent bonds between Lys and Met residues. In terms of processing, phosphorylated. Thought to be phosphorylated by CERT, but CERT does not have kinase activity. As to expression, highly expressed in kidney and lung. Detected at lower levels in heart, muscle and skin.

Its subcellular location is the secreted. It localises to the extracellular space. The protein resides in the extracellular matrix. It is found in the basement membrane. In terms of biological role, type IV collagen is the major structural component of glomerular basement membranes (GBM), forming a 'chicken-wire' meshwork together with laminins, proteoglycans and entactin/nidogen. Tumstatin, a cleavage fragment corresponding to the collagen alpha 3(IV) NC1 domain, possesses both anti-angiogenic and anti-tumor cell activity; these two anti-tumor properties may be regulated via RGD-independent ITGB3-mediated mechanisms. This Mus musculus (Mouse) protein is Collagen alpha-3(IV) chain.